A 346-amino-acid chain; its full sequence is MLVLGIESSCDETGLALYDTQRGLLAHALHSQIAMHRDYGGVVPELASRDHIRRALPLLEEVMAQSGTRRDDIDAIAFTQGPGLAGALLVGASIANALALAWNKPTVGIHHLEGHLLSPLLVDEPPPFPFVALLVSGGHTQLMRVTDVGVYETLGETLDDAAGEAFDKTAKLIGLGYPGGPEVSKLAETGTPGAVVLPRPMLHSGDLDFSFSGLKTAVLTQMKKFEAAKLDGEALERAKADLARGFVDAAVDVLVAKSLAALKKTKLKRLVVAGGVGANRQLRAALSAAAAKRGFDVHYPDLALCTDNGAMIALAGALRLGRWPEQANADYAFTVKPRWDLASLAG.

Fe cation contacts are provided by histidine 111 and histidine 115. Substrate is bound by residues 134–138 (LVSGG), aspartate 167, glycine 180, and asparagine 279. A Fe cation-binding site is contributed by aspartate 307.

This sequence belongs to the KAE1 / TsaD family. It depends on Fe(2+) as a cofactor.

Its subcellular location is the cytoplasm. It carries out the reaction L-threonylcarbamoyladenylate + adenosine(37) in tRNA = N(6)-L-threonylcarbamoyladenosine(37) in tRNA + AMP + H(+). Functionally, required for the formation of a threonylcarbamoyl group on adenosine at position 37 (t(6)A37) in tRNAs that read codons beginning with adenine. Is involved in the transfer of the threonylcarbamoyl moiety of threonylcarbamoyl-AMP (TC-AMP) to the N6 group of A37, together with TsaE and TsaB. TsaD likely plays a direct catalytic role in this reaction. In Burkholderia cenocepacia (strain HI2424), this protein is tRNA N6-adenosine threonylcarbamoyltransferase.